Here is a 142-residue protein sequence, read N- to C-terminus: Prefoldin subunit alpha (142 aa).

It belongs to the prefoldin subunit alpha family. As to quaternary structure, heterohexamer of two alpha and four beta subunits.

The protein localises to the cytoplasm. Functionally, molecular chaperone capable of stabilizing a range of proteins. Seems to fulfill an ATP-independent, HSP70-like function in archaeal de novo protein folding. The sequence is that of Prefoldin subunit alpha from Methanosarcina acetivorans (strain ATCC 35395 / DSM 2834 / JCM 12185 / C2A).